The sequence spans 196 residues: Guanylate kinase (196 aa).

Residues 8–189 (GKIIIISGPS…AADKLRHILY (182 aa)) enclose the Guanylate kinase-like domain. 15 to 22 (GPSGVGKK) lines the ATP pocket.

It belongs to the guanylate kinase family.

It is found in the cytoplasm. The enzyme catalyses GMP + ATP = GDP + ADP. In terms of biological role, essential for recycling GMP and indirectly, cGMP. The chain is Guanylate kinase from Malacoplasma penetrans (strain HF-2) (Mycoplasma penetrans).